We begin with the raw amino-acid sequence, 70 residues long: Mu-conotoxin PnIVB (70 aa).

The first 20 residues, 1–20 (MMSKLGVLLIICLLLCPLTA), serve as a signal peptide directing secretion. A propeptide spanning residues 21 to 51 (VPQDGDQPADQPAERMQDDISSEHHPFFDPV) is cleaved from the precursor.

Post-translationally, contains 3 disulfide bonds. They are not added, since framework IV presents two different connectivities (I-V, II-III, IV-VI and I-III, II-V, IV-VI). In terms of tissue distribution, expressed by the venom duct.

It localises to the secreted. Functionally, mu-conotoxins block voltage-gated sodium channels (Nav). Blocks reversibly sodium channels in molluskan neurons, but has no effect on sodium currents in bovine chromaffin cells or in rat brain synaptosomes. Induces paralysis in bivalve mollusks (Mytilus). No effect are observed on fish (Gambusia) and fly larvae (Sarcophaga). Is approximately 6 times more potent than PnIVA in blockade of the sodium current in Lymnaea neurons. The protein is Mu-conotoxin PnIVB of Conus pennaceus (Feathered cone).